The following is a 525-amino-acid chain: BTB/POZ domain-containing protein 2 (525 aa).

Residues 1-86 (MAAGGSGGRA…AEEAAGPGAA (86 aa)) form a disordered region. Residues 16-26 (VGVGPGTGGSP) show a composition bias toward gly residues. A compositionally biased stretch (low complexity) spans 27-55 (GPSANAAATPAPGNAAAAAAAAAAAAAAP). Residues 56 to 65 (GPTPPAPPGP) show a composition bias toward pro residues. A compositionally biased stretch (low complexity) spans 66–86 (GTDAQAAGAERAEEAAGPGAA). A BTB domain is found at 117-187 (CDVHFLVGKG…LYSDEVQIGP (71 aa)).

As to quaternary structure, interacts with topoisomerase 1 and with TRIM5 isoform Delta.

The protein localises to the cytoplasm. This Homo sapiens (Human) protein is BTB/POZ domain-containing protein 2 (BTBD2).